Here is a 44-residue protein sequence, read N- to C-terminus: Photosystem I reaction center subunit IX (44 aa).

A helical membrane pass occupies residues F9 to I29.

It belongs to the PsaJ family.

The protein resides in the cellular thylakoid membrane. Functionally, may help in the organization of the PsaE and PsaF subunits. The polypeptide is Photosystem I reaction center subunit IX (Prochlorococcus marinus (strain MIT 9301)).